Here is a 261-residue protein sequence, read N- to C-terminus: Indole-3-glycerol phosphate synthase (261 aa).

Belongs to the TrpC family.

It carries out the reaction 1-(2-carboxyphenylamino)-1-deoxy-D-ribulose 5-phosphate + H(+) = (1S,2R)-1-C-(indol-3-yl)glycerol 3-phosphate + CO2 + H2O. The protein operates within amino-acid biosynthesis; L-tryptophan biosynthesis; L-tryptophan from chorismate: step 4/5. In Paraburkholderia phytofirmans (strain DSM 17436 / LMG 22146 / PsJN) (Burkholderia phytofirmans), this protein is Indole-3-glycerol phosphate synthase.